The chain runs to 253 residues: Probable transcriptional regulatory protein RAF_ORF0717 (253 aa).

Residues Met1–Arg21 are disordered.

It belongs to the TACO1 family.

The protein localises to the cytoplasm. This Rickettsia africae (strain ESF-5) protein is Probable transcriptional regulatory protein RAF_ORF0717.